The sequence spans 417 residues: Probable uracil permease (417 aa).

Over Met1–Asn13 the chain is Cytoplasmic. Residues His14–Leu37 traverse the membrane as a helical segment. Residues Ile38–Leu41 lie on the Periplasmic side of the membrane. A helical transmembrane segment spans residues Asn42 to Thr61. The Cytoplasmic segment spans residues Gly62–Gln64. A discontinuously helical transmembrane segment spans residues Val65–Tyr81. Uracil is bound at residue Phe73. Residues Val83–Thr90 are Periplasmic-facing. A helical membrane pass occupies residues Thr91 to Ile111. Residues Lys112–Pro123 lie on the Cytoplasmic side of the membrane. The chain crosses the membrane as a helical span at residues Val124–Ala145. Residues Leu146–Tyr154 lie on the Periplasmic side of the membrane. Residues Asn155–Gly170 traverse the membrane as a helical segment. The Cytoplasmic segment spans residues Val171–Gly177. Residues Met178 to Leu198 traverse the membrane as a helical segment. Residues Gly199 to Lys223 lie on the Periplasmic side of the membrane. Residues Leu224–Ala247 form a helical membrane-spanning segment. Residue Glu240 coordinates uracil. At Ile248–Pro260 the chain is on the cytoplasmic side. Residues Gly261 to Gly280 traverse the membrane as a helical segment. Residues Gly281 to Thr297 traverse the membrane as a discontinuously helical segment. Glu289 contributes to the uracil binding site. At Arg298–Phe300 the chain is on the cytoplasmic side. The chain crosses the membrane as a helical span at residues Asn301–Cys318. Residues Gly319–Ile331 are Periplasmic-facing. A helical transmembrane segment spans residues Val332 to Ile353. Residues Arg354 to Asn364 are Cytoplasmic-facing. The segment at residues Leu365–Leu400 is an intramembrane region (discontinuously helical). The Cytoplasmic portion of the chain corresponds to Leu401–Asn416.

This sequence belongs to the nucleobase:cation symporter-2 (NCS2) (TC 2.A.40) family.

It localises to the cell inner membrane. It catalyses the reaction uracil(in) + H(+)(in) = uracil(out) + H(+)(out). Functionally, transport of uracil in the cell. This is Probable uracil permease (uraA) from Pasteurella multocida (strain Pm70).